Here is an 81-residue protein sequence, read N- to C-terminus: Photosystem I iron-sulfur center (81 aa).

2 consecutive 4Fe-4S ferredoxin-type domains span residues 2 to 31 (AHTVKIYDNCIGCTQCVRACPLDVLEMVPW) and 39 to 68 (MASAPRTEDCVGCKRCETACPTDFLSIRVY). [4Fe-4S] cluster contacts are provided by cysteine 11, cysteine 14, cysteine 17, cysteine 21, cysteine 48, cysteine 51, cysteine 54, and cysteine 58.

In terms of assembly, the eukaryotic PSI reaction center is composed of at least 11 subunits. [4Fe-4S] cluster serves as cofactor.

It is found in the plastid. It localises to the chloroplast thylakoid membrane. The catalysed reaction is reduced [plastocyanin] + hnu + oxidized [2Fe-2S]-[ferredoxin] = oxidized [plastocyanin] + reduced [2Fe-2S]-[ferredoxin]. Functionally, apoprotein for the two 4Fe-4S centers FA and FB of photosystem I (PSI); essential for photochemical activity. FB is the terminal electron acceptor of PSI, donating electrons to ferredoxin. The C-terminus interacts with PsaA/B/D and helps assemble the protein into the PSI complex. Required for binding of PsaD and PsaE to PSI. PSI is a plastocyanin/cytochrome c6-ferredoxin oxidoreductase, converting photonic excitation into a charge separation, which transfers an electron from the donor P700 chlorophyll pair to the spectroscopically characterized acceptors A0, A1, FX, FA and FB in turn. This is Photosystem I iron-sulfur center from Cyanidioschyzon merolae (strain NIES-3377 / 10D) (Unicellular red alga).